A 333-amino-acid chain; its full sequence is GTPase Obg (333 aa).

In terms of domain architecture, Obg spans 1 to 159 (MQFIDLAEIH…RHLRLELKLL (159 aa)). The region spanning 160–328 (AEVGIIGLPN…LLEAVWQELG (169 aa)) is the OBG-type G domain. Residues 166-173 (GLPNAGKS), 191-195 (FTTLV), 213-216 (DIPG), 280-283 (NKID), and 309-311 (SAV) each bind GTP. Mg(2+)-binding residues include serine 173 and threonine 193.

It belongs to the TRAFAC class OBG-HflX-like GTPase superfamily. OBG GTPase family. In terms of assembly, monomer. Requires Mg(2+) as cofactor.

The protein resides in the cytoplasm. Its function is as follows. An essential GTPase which binds GTP, GDP and possibly (p)ppGpp with moderate affinity, with high nucleotide exchange rates and a fairly low GTP hydrolysis rate. Plays a role in control of the cell cycle, stress response, ribosome biogenesis and in those bacteria that undergo differentiation, in morphogenesis control. This chain is GTPase Obg, found in Thermosynechococcus vestitus (strain NIES-2133 / IAM M-273 / BP-1).